Reading from the N-terminus, the 201-residue chain is Pyrrolidone-carboxylate peptidase (201 aa).

Catalysis depends on residues glutamate 81, cysteine 143, and histidine 168.

It belongs to the peptidase C15 family. Homotetramer.

Its subcellular location is the cytoplasm. It carries out the reaction Release of an N-terminal pyroglutamyl group from a polypeptide, the second amino acid generally not being Pro.. Removes 5-oxoproline from various penultimate amino acid residues except L-proline. This Halalkalibacterium halodurans (strain ATCC BAA-125 / DSM 18197 / FERM 7344 / JCM 9153 / C-125) (Bacillus halodurans) protein is Pyrrolidone-carboxylate peptidase (pcp).